The sequence spans 268 residues: Probable RNA methyltransferase C2A9.10 (268 aa).

One can recognise a Bin3-type SAM domain in the interval 23–258; the sequence is DPRLKCLPDS…RTMYIYKKKG (236 aa).

This sequence belongs to the methyltransferase superfamily.

Its function is as follows. Probable RNA methyltransferase. In Schizosaccharomyces pombe (strain 972 / ATCC 24843) (Fission yeast), this protein is Probable RNA methyltransferase C2A9.10.